The sequence spans 405 residues: Potassium channel subfamily K member 18 (405 aa).

The helical transmembrane segment at 43–63 (LPGLCFLCCLVTYALVGAALF) threads the bilayer. An N-linked (GlcNAc...) asparagine glycan is attached at Asn-94. Positions 125-151 (FLSALFFCCTVFSTVGYGHMYPVTRLG) form an intramembrane region, pore-forming. Thr-138, Val-139, Gly-140, and Tyr-141 together coordinate K(+). Residues 138 to 143 (TVGYGH) form a selectivity filter 1 region. Residues 153–173 (FLCMLYALFGIPLMFLVLTDI) traverse the membrane as a helical segment. Residues 221-226 (PQIVID) form an interaction with calcineurin region. An interaction with YWHAH region spans residues 272–277 (RSNSCP). Phosphoserine occurs at positions 275 and 287. Residues 304–324 (IPLPVIALVIFAYISCAAAIL) traverse the membrane as a helical segment. The pore-forming intramembrane region spans 337 to 351 (FYFCFVTLTTIGFGD). A selectivity filter 2 region spans residues 346-351 (TIGFGD). A helical membrane pass occupies residues 358 to 378 (HFFLFFSIYIIVGMEILFIAF).

The protein belongs to the two pore domain potassium channel (TC 1.A.1.8) family. As to quaternary structure, homodimer. Heterodimer with KCNK2. Heterodimer with KCNK10. Interacts with calcineurin. Interacts with YWHAH, in a phosphorylation-dependent manner. Phosphorylation of Ser-275 is required for the binding of 14-3-3eta/YWHAH. Calcineurin-mediated dephosphorylation of Ser-287 enhances channel activity. Post-translationally, N-glycosylated.

The protein localises to the cell membrane. It catalyses the reaction K(+)(in) = K(+)(out). Its activity is regulated as follows. Activated by volatile anesthetics, such as isoflurane and inhibited by local anesthetics such as bupivacaine and lidocaine. Inhibited by extracellular acidic pH. Inhibited by Zn(2+) ions. K(+) channel that conducts outward and inward rectifying currents at depolarized and hyperpolarized membrane potentials, respectively. The outward rectifying currents are voltage-dependent, coupled to K(+) electrochemical gradient across the membrane, whereas the inward currents can be induced in response to activation of Ca(2+)-mobilizing receptors. Homo- and heterodimerizes to form functional channels with distinct regulatory and gating properties. In trigeminal ganglia sensory neurons, the heterodimers of KCNK18/TRESK and KCNK2/TREK-1 or KCNK10/TREK-2 inhibit neuronal firing and neurogenic inflammation by stabilizing the resting membrane potential at K(+) equilibrium potential as well as by regulating the threshold of action potentials and the spike frequency. In thymocytes, conducts K(+) currents upon T cell receptor (TCR) signaling leading to sustained Ca(2+) influx and NF-kappa-B activation, FOXP3 transcription and positive selection of regulatory T cell (Treg) progenitor subsets. Appears to mediate the analgesics effects of hydroxy-alpha-sanshool, a metabolite naturally present in Schezuan pepper and other Xanthoxylum plants. The protein is Potassium channel subfamily K member 18 (Kcnk18) of Rattus norvegicus (Rat).